Consider the following 230-residue polypeptide: UPF0502 protein Oter_3715 (230 aa).

Belongs to the UPF0502 family.

This Opitutus terrae (strain DSM 11246 / JCM 15787 / PB90-1) protein is UPF0502 protein Oter_3715.